The following is a 729-amino-acid chain: MPKNSKVVKRDLDDDVIESVKDLLSNEDSVEDVSKKSELIVDVQEEKDTDAEDGSEVDDERPAWNSKLQYILAQVGFSVGLGNVWRFPYLCQKNGGGAYLLPYLILLLVIGIPLFFLELSVGQRIRRGSIGVWNYISPKLGGIGFASCVVCYFVALYYNVIIGWTLFYFSQSFQQPLPWDQCPLVKNASHTYIEPECEKSSATTYYWYREALAISSSISESGGLNWKMTGCLLAAWVMVCLAMIKGIQSSGKIMYFSSLFPYVVLICFLIRSLLLNGSIDGIRHMFTPKLEMMLEPKVWREAATQVFFALGLGFGGVIAFSSYNKRDNNCHFDAVLVSFINFFTSVLATLVVFAVLGFKANIVNEKCISQNSEMILKLLKTGNVSWDVIPRHINLSAVTAEDYHVVYDIIQKVKEEEFAVLHLKACQIEDELNKAVQGTGLAFIAFTEAMTHFPASPFWSVMFFLMLINLGLGSMFGTIEGIITPVVDTFKVRKEILTVICCLLAFCIGLMFVQRSGNYFVTMFDDYSATLPLLIVVILENIAVSFVYGIDKFLEDLTDMLGFAPSKYYYYMWKYISPLMLVTLLIASIVNMGLSPPGYNAWIKEKASEEFLSYPMWGMVVCFSLMVLAILPVPVVFVIRRCNLIDDSSGNLASVTYKRGRVLKEPVNLDGDDASLIHGKIPSEMSSPNFGKNIYRKQSGSPTLDTAPNGRYGIGYLMADMPDMPESDL.

Over 1 to 69 (MPKNSKVVKR…ERPAWNSKLQ (69 aa)) the chain is Cytoplasmic. A phosphoserine mark is found at S25 and S55. 3 helical membrane passes run 70-90 (YILA…FPYL), 98-117 (AYLL…LFFL), and 142-162 (GIGF…NVII). At 163–225 (GWTLFYFSQS…SSISESGGLN (63 aa)) the chain is on the extracellular side. A glycan (N-linked (GlcNAc...) asparagine) is linked at N187. 4 helical membrane-spanning segments follow: residues 226–244 (WKMT…LAMI), 253–270 (IMYF…CFLI), 306–323 (VFFA…FSSY), and 335–356 (VLVS…FAVL). The Extracellular portion of the chain corresponds to 357-452 (GFKANIVNEK…FIAFTEAMTH (96 aa)). N383 and N394 each carry an N-linked (GlcNAc...) asparagine glycan. Helical transmembrane passes span 453 to 472 (FPAS…NLGL), 496 to 514 (ILTV…MFVQ), 530 to 550 (TLPL…VYGI), 571 to 592 (YMWK…IVNM), and 620 to 642 (VVCF…IRRC). Over 643–729 (NLIDDSSGNL…DMPDMPESDL (87 aa)) the chain is Cytoplasmic. Phosphoserine occurs at positions 687, 699, and 701.

This sequence belongs to the sodium:neurotransmitter symporter (SNF) (TC 2.A.22) family. SLC6A15 subfamily. In terms of tissue distribution, widely distributed in the central nervous system, including the olfactory bulb, the hypothalamus, the cerebral cortex, the hippocampus, and the cerebellum. In addition, intense expression is found in the motor nuclei including the oculomotor nucleus, abducens nucleus, trigeminal motor nucleus, facial nucleus, hypoglossal nucleus and ventral horn of spinal cord. Intense hybridization signals are also observed in the nuclei containing monoaminergic neurons, such as locus coeruleus, the substantia nigra pars compacta, the ventral tegmental area, the dorsal raphe nucleus and the median raphe nucleus.

It localises to the membrane. The enzyme catalyses L-leucine(in) + Na(+)(in) = L-leucine(out) + Na(+)(out). It carries out the reaction L-isoleucine(in) + Na(+)(in) = L-isoleucine(out) + Na(+)(out). It catalyses the reaction L-methionine(in) + Na(+)(in) = L-methionine(out) + Na(+)(out). The catalysed reaction is L-proline(in) + Na(+)(in) = L-proline(out) + Na(+)(out). The enzyme catalyses L-alanine(in) + Na(+)(in) = L-alanine(out) + Na(+)(out). It carries out the reaction L-asparagine(in) + Na(+)(in) = L-asparagine(out) + Na(+)(out). It catalyses the reaction L-valine(in) + Na(+)(in) = L-valine(out) + Na(+)(out). The catalysed reaction is L-cysteine(in) + Na(+)(in) = L-cysteine(out) + Na(+)(out). The enzyme catalyses L-glutamine(in) + Na(+)(in) = L-glutamine(out) + Na(+)(out). It carries out the reaction L-serine(in) + Na(+)(in) = L-serine(out) + Na(+)(out). It catalyses the reaction L-threonine(in) + Na(+)(in) = L-threonine(out) + Na(+)(out). The catalysed reaction is L-pipecolate(in) + Na(+)(in) = L-pipecolate(out) + Na(+)(out). The enzyme catalyses L-phenylalanine(in) + Na(+)(in) = L-phenylalanine(out) + Na(+)(out). In terms of biological role, functions as a sodium-dependent neutral amino acid transporter. Exhibits preference for the branched-chain amino acids, particularly leucine, valine and isoleucine and methionine. Can also transport low-affinity substrates such as alanine, phenylalanine, glutamine and pipecolic acid. Mediates the saturable, pH-sensitive and electrogenic cotransport of proline and sodium ions with a stoichiometry of 1:1. May have a role as transporter for neurotransmitter precursors into neurons. In contrast to other members of the neurotransmitter transporter family, does not appear to be chloride-dependent. This is Sodium-dependent neutral amino acid transporter B(0)AT2 (Slc6a15) from Rattus norvegicus (Rat).